We begin with the raw amino-acid sequence, 174 residues long: CDP-archaeol synthase (174 aa).

4 helical membrane passes run 51-71 (LIGL…AGFI), 74-94 (SLLV…ALLG), 112-132 (MLPI…TFLL), and 136-156 (WLLA…IPVF).

Belongs to the CDP-archaeol synthase family. It depends on Mg(2+) as a cofactor.

The protein localises to the cell membrane. It catalyses the reaction 2,3-bis-O-(geranylgeranyl)-sn-glycerol 1-phosphate + CTP + H(+) = CDP-2,3-bis-O-(geranylgeranyl)-sn-glycerol + diphosphate. It functions in the pathway membrane lipid metabolism; glycerophospholipid metabolism. Its function is as follows. Catalyzes the formation of CDP-2,3-bis-(O-geranylgeranyl)-sn-glycerol (CDP-archaeol) from 2,3-bis-(O-geranylgeranyl)-sn-glycerol 1-phosphate (DGGGP) and CTP. This reaction is the third ether-bond-formation step in the biosynthesis of archaeal membrane lipids. The polypeptide is CDP-archaeol synthase (Methanocella arvoryzae (strain DSM 22066 / NBRC 105507 / MRE50)).